A 489-amino-acid polypeptide reads, in one-letter code: Adenosylhomocysteinase (489 aa).

Residues T68, D151, and E213 each coordinate substrate. 214 to 216 (TTT) is a binding site for NAD(+). Substrate-binding residues include K243 and D247. NAD(+) contacts are provided by residues N248, 277–282 (GYGDVG), E300, N335, 356–358 (IGH), and N403.

It belongs to the adenosylhomocysteinase family. NAD(+) is required as a cofactor.

The protein localises to the cytoplasm. It carries out the reaction S-adenosyl-L-homocysteine + H2O = L-homocysteine + adenosine. Its pathway is amino-acid biosynthesis; L-homocysteine biosynthesis; L-homocysteine from S-adenosyl-L-homocysteine: step 1/1. Its function is as follows. May play a key role in the regulation of the intracellular concentration of adenosylhomocysteine. The chain is Adenosylhomocysteinase from Mycobacterium sp. (strain JLS).